Here is a 102-residue protein sequence, read N- to C-terminus: PqqA binding protein (102 aa).

This sequence belongs to the PqqD family. Monomer. Interacts with PqqE.

It participates in cofactor biosynthesis; pyrroloquinoline quinone biosynthesis. Functionally, functions as a PqqA binding protein and presents PqqA to PqqE, in the pyrroloquinoline quinone (PQQ) biosynthetic pathway. The protein is PqqA binding protein of Rhodopseudomonas palustris (strain BisB5).